A 370-amino-acid polypeptide reads, in one-letter code: S-adenosylmethionine:tRNA ribosyltransferase-isomerase (370 aa).

This sequence belongs to the QueA family. Monomer.

The protein resides in the cytoplasm. The catalysed reaction is 7-aminomethyl-7-carbaguanosine(34) in tRNA + S-adenosyl-L-methionine = epoxyqueuosine(34) in tRNA + adenine + L-methionine + 2 H(+). It functions in the pathway tRNA modification; tRNA-queuosine biosynthesis. In terms of biological role, transfers and isomerizes the ribose moiety from AdoMet to the 7-aminomethyl group of 7-deazaguanine (preQ1-tRNA) to give epoxyqueuosine (oQ-tRNA). The chain is S-adenosylmethionine:tRNA ribosyltransferase-isomerase from Synechococcus sp. (strain WH7803).